The primary structure comprises 542 residues: Putative cysteine ligase BshC (542 aa).

Residues 458–487 are a coiled coil; sequence VAKNAAIIQAQIEFLQQTLERALLSKHEVE.

This sequence belongs to the BshC family.

Its function is as follows. Involved in bacillithiol (BSH) biosynthesis. May catalyze the last step of the pathway, the addition of cysteine to glucosamine malate (GlcN-Mal) to generate BSH. The polypeptide is Putative cysteine ligase BshC (Geobacillus thermodenitrificans (strain NG80-2)).